Here is a 294-residue protein sequence, read N- to C-terminus: Elongation factor Ts (294 aa).

The involved in Mg(2+) ion dislocation from EF-Tu stretch occupies residues 79-82 (TDFV).

It belongs to the EF-Ts family.

It localises to the cytoplasm. Associates with the EF-Tu.GDP complex and induces the exchange of GDP to GTP. It remains bound to the aminoacyl-tRNA.EF-Tu.GTP complex up to the GTP hydrolysis stage on the ribosome. This Oceanobacillus iheyensis (strain DSM 14371 / CIP 107618 / JCM 11309 / KCTC 3954 / HTE831) protein is Elongation factor Ts.